We begin with the raw amino-acid sequence, 435 residues long: Probable tRNA pseudouridine synthase D (435 aa).

D95 acts as the Nucleophile in catalysis. Residues 170-396 form the TRUD domain; the sequence is GVPNYFGTQR…SSGTRRAVLV (227 aa).

This sequence belongs to the pseudouridine synthase TruD family.

The enzyme catalyses uridine(13) in tRNA = pseudouridine(13) in tRNA. Its function is as follows. Could be responsible for synthesis of pseudouridine from uracil-13 in transfer RNAs. The protein is Probable tRNA pseudouridine synthase D of Natronomonas pharaonis (strain ATCC 35678 / DSM 2160 / CIP 103997 / JCM 8858 / NBRC 14720 / NCIMB 2260 / Gabara) (Halobacterium pharaonis).